Here is a 268-residue protein sequence, read N- to C-terminus: Elongation factor Ts (268 aa).

The segment at 81–84 (TDFV) is involved in Mg(2+) ion dislocation from EF-Tu.

The protein belongs to the EF-Ts family.

It localises to the cytoplasm. In terms of biological role, associates with the EF-Tu.GDP complex and induces the exchange of GDP to GTP. It remains bound to the aminoacyl-tRNA.EF-Tu.GTP complex up to the GTP hydrolysis stage on the ribosome. This Buchnera aphidicola subsp. Acyrthosiphon pisum (strain 5A) protein is Elongation factor Ts.